The primary structure comprises 617 residues: Dihydroxy-acid dehydratase (617 aa).

Asp-81 is a Mg(2+) binding site. Cys-122 contacts [2Fe-2S] cluster. Asp-123 and Lys-124 together coordinate Mg(2+). Residue Lys-124 is modified to N6-carboxylysine. Residue Cys-195 participates in [2Fe-2S] cluster binding. Glu-490 is a binding site for Mg(2+). Ser-516 (proton acceptor) is an active-site residue.

It belongs to the IlvD/Edd family. Homodimer. [2Fe-2S] cluster serves as cofactor. Mg(2+) is required as a cofactor.

It catalyses the reaction (2R)-2,3-dihydroxy-3-methylbutanoate = 3-methyl-2-oxobutanoate + H2O. The enzyme catalyses (2R,3R)-2,3-dihydroxy-3-methylpentanoate = (S)-3-methyl-2-oxopentanoate + H2O. It functions in the pathway amino-acid biosynthesis; L-isoleucine biosynthesis; L-isoleucine from 2-oxobutanoate: step 3/4. The protein operates within amino-acid biosynthesis; L-valine biosynthesis; L-valine from pyruvate: step 3/4. Functionally, functions in the biosynthesis of branched-chain amino acids. Catalyzes the dehydration of (2R,3R)-2,3-dihydroxy-3-methylpentanoate (2,3-dihydroxy-3-methylvalerate) into 2-oxo-3-methylpentanoate (2-oxo-3-methylvalerate) and of (2R)-2,3-dihydroxy-3-methylbutanoate (2,3-dihydroxyisovalerate) into 2-oxo-3-methylbutanoate (2-oxoisovalerate), the penultimate precursor to L-isoleucine and L-valine, respectively. The chain is Dihydroxy-acid dehydratase from Acidiphilium cryptum (strain JF-5).